The following is a 146-amino-acid chain: Deoxyuridine 5'-triphosphate nucleotidohydrolase (146 aa).

Substrate-binding positions include R60–G62, N73, and V77–D79.

Belongs to the dUTPase family. Requires Mg(2+) as cofactor.

It catalyses the reaction dUTP + H2O = dUMP + diphosphate + H(+). It functions in the pathway pyrimidine metabolism; dUMP biosynthesis; dUMP from dCTP (dUTP route): step 2/2. This enzyme is involved in nucleotide metabolism: it produces dUMP, the immediate precursor of thymidine nucleotides and it decreases the intracellular concentration of dUTP so that uracil cannot be incorporated into DNA. This chain is Deoxyuridine 5'-triphosphate nucleotidohydrolase, found in Tropheryma whipplei (strain TW08/27) (Whipple's bacillus).